A 383-amino-acid polypeptide reads, in one-letter code: UPF0425 pyridoxal phosphate-dependent protein Msp_0916 (383 aa).

Position 207 is an N6-(pyridoxal phosphate)lysine (Lys-207).

This sequence belongs to the UPF0425 family. It depends on pyridoxal 5'-phosphate as a cofactor.

The chain is UPF0425 pyridoxal phosphate-dependent protein Msp_0916 from Methanosphaera stadtmanae (strain ATCC 43021 / DSM 3091 / JCM 11832 / MCB-3).